A 252-amino-acid polypeptide reads, in one-letter code: D-aminoacyl-tRNA deacylase (252 aa).

The protein belongs to the DtdA deacylase family. In terms of assembly, monomer. The cofactor is Zn(2+).

The enzyme catalyses a D-aminoacyl-tRNA + H2O = a tRNA + a D-alpha-amino acid + H(+). It carries out the reaction glycyl-tRNA(Ala) + H2O = tRNA(Ala) + glycine + H(+). D-aminoacyl-tRNA deacylase with broad substrate specificity. By recycling D-aminoacyl-tRNA to D-amino acids and free tRNA molecules, this enzyme counteracts the toxicity associated with the formation of D-aminoacyl-tRNA entities in vivo. The polypeptide is D-aminoacyl-tRNA deacylase (Pyrobaculum neutrophilum (strain DSM 2338 / JCM 9278 / NBRC 100436 / V24Sta) (Thermoproteus neutrophilus)).